Consider the following 161-residue polypeptide: ATP synthase subunit b 2 (161 aa).

The chain crosses the membrane as a helical span at residues 13-33; it reads IVWLVIALVAMYFVMSRLAIP.

The protein belongs to the ATPase B chain family. As to quaternary structure, F-type ATPases have 2 components, F(1) - the catalytic core - and F(0) - the membrane proton channel. F(1) has five subunits: alpha(3), beta(3), gamma(1), delta(1), epsilon(1). F(0) has three main subunits: a(1), b(2) and c(10-14). The alpha and beta chains form an alternating ring which encloses part of the gamma chain. F(1) is attached to F(0) by a central stalk formed by the gamma and epsilon chains, while a peripheral stalk is formed by the delta and b chains.

It localises to the cell inner membrane. F(1)F(0) ATP synthase produces ATP from ADP in the presence of a proton or sodium gradient. F-type ATPases consist of two structural domains, F(1) containing the extramembraneous catalytic core and F(0) containing the membrane proton channel, linked together by a central stalk and a peripheral stalk. During catalysis, ATP synthesis in the catalytic domain of F(1) is coupled via a rotary mechanism of the central stalk subunits to proton translocation. Its function is as follows. Component of the F(0) channel, it forms part of the peripheral stalk, linking F(1) to F(0). The b'-subunit is a diverged and duplicated form of b found in plants and photosynthetic bacteria. This is ATP synthase subunit b 2 (atpF2) from Rhodospirillum rubrum (strain ATCC 11170 / ATH 1.1.1 / DSM 467 / LMG 4362 / NCIMB 8255 / S1).